The sequence spans 165 residues: NADPH-dependent 7-cyano-7-deazaguanine reductase (165 aa).

Cys-56 functions as the Thioimide intermediate in the catalytic mechanism. The active-site Proton donor is Asp-63. Substrate contacts are provided by residues Val-78 to Ser-80 and His-97 to Glu-98.

It belongs to the GTP cyclohydrolase I family. QueF type 1 subfamily.

Its subcellular location is the cytoplasm. It catalyses the reaction 7-aminomethyl-7-carbaguanine + 2 NADP(+) = 7-cyano-7-deazaguanine + 2 NADPH + 3 H(+). The protein operates within tRNA modification; tRNA-queuosine biosynthesis. In terms of biological role, catalyzes the NADPH-dependent reduction of 7-cyano-7-deazaguanine (preQ0) to 7-aminomethyl-7-deazaguanine (preQ1). The protein is NADPH-dependent 7-cyano-7-deazaguanine reductase of Geobacillus thermodenitrificans (strain NG80-2).